A 313-amino-acid chain; its full sequence is Hsp90 co-chaperone Cdc37-like 1 (313 aa).

The protein belongs to the CDC37 family. Forms complexes with Hsp70 and Hsp90.

The protein resides in the cytoplasm. Its function is as follows. Co-chaperone that binds to numerous proteins and promotes their interaction with Hsp70 and Hsp90. In Danio rerio (Zebrafish), this protein is Hsp90 co-chaperone Cdc37-like 1 (cdc37l1).